The chain runs to 501 residues: Phenylalanine--tRNA ligase alpha subunit (501 aa).

Threonine 340 and phenylalanine 423 together coordinate L-phenylalanine. Glutamate 425 contacts Mg(2+). Phenylalanine 448 contributes to the L-phenylalanine binding site.

It belongs to the class-II aminoacyl-tRNA synthetase family. Phe-tRNA synthetase alpha subunit type 2 subfamily. As to quaternary structure, tetramer of two alpha and two beta subunits. It depends on Mg(2+) as a cofactor.

Its subcellular location is the cytoplasm. It carries out the reaction tRNA(Phe) + L-phenylalanine + ATP = L-phenylalanyl-tRNA(Phe) + AMP + diphosphate + H(+). This is Phenylalanine--tRNA ligase alpha subunit from Methanococcus maripaludis (strain C5 / ATCC BAA-1333).